We begin with the raw amino-acid sequence, 224 residues long: Triosephosphate isomerase (224 aa).

Position 9-11 (9-11) interacts with substrate; sequence NFK. Catalysis depends on His-93, which acts as the Electrophile. Residue Glu-141 is the Proton acceptor of the active site. Substrate is bound by residues Ile-146, Gly-181, and 202–203; that span reads AS.

It belongs to the triosephosphate isomerase family. In terms of assembly, homotetramer; dimer of dimers.

Its subcellular location is the cytoplasm. It catalyses the reaction D-glyceraldehyde 3-phosphate = dihydroxyacetone phosphate. The protein operates within carbohydrate biosynthesis; gluconeogenesis. Its pathway is carbohydrate degradation; glycolysis; D-glyceraldehyde 3-phosphate from glycerone phosphate: step 1/1. Involved in the gluconeogenesis. Catalyzes stereospecifically the conversion of dihydroxyacetone phosphate (DHAP) to D-glyceraldehyde-3-phosphate (G3P). This is Triosephosphate isomerase from Pyrobaculum arsenaticum (strain DSM 13514 / JCM 11321 / PZ6).